The following is a 114-amino-acid chain: MSYKEGDVLVTNGEQSPGYKIVEIKGLVVGITVRSRGLGKNIIASLRSLLGGEIKEYVELAEQARLQALQRMVDNAKALGANAVVNVRFDSNELSEAMDEIIAYGTAVVVEKSS.

It belongs to the UPF0145 family.

This chain is UPF0145 protein SSO1976, found in Saccharolobus solfataricus (strain ATCC 35092 / DSM 1617 / JCM 11322 / P2) (Sulfolobus solfataricus).